We begin with the raw amino-acid sequence, 395 residues long: DNA polymerase IV (395 aa).

Positions 7-187 (FFHVDIDAFF…LPLKDVWGVG (181 aa)) constitute a UmuC domain. Residues Asp-11 and Asp-105 each contribute to the Mg(2+) site. The active site involves Glu-106.

This sequence belongs to the DNA polymerase type-Y family. Monomer. Mg(2+) is required as a cofactor.

It localises to the cytoplasm. The catalysed reaction is DNA(n) + a 2'-deoxyribonucleoside 5'-triphosphate = DNA(n+1) + diphosphate. In terms of biological role, poorly processive, error-prone DNA polymerase involved in untargeted mutagenesis. Copies undamaged DNA at stalled replication forks, which arise in vivo from mismatched or misaligned primer ends. These misaligned primers can be extended by PolIV. Exhibits no 3'-5' exonuclease (proofreading) activity. May be involved in translesional synthesis, in conjunction with the beta clamp from PolIII. The polypeptide is DNA polymerase IV (Treponema denticola (strain ATCC 35405 / DSM 14222 / CIP 103919 / JCM 8153 / KCTC 15104)).